A 65-amino-acid polypeptide reads, in one-letter code: Large ribosomal subunit protein bL35 (65 aa).

This sequence belongs to the bacterial ribosomal protein bL35 family.

This Parasynechococcus marenigrum (strain WH8102) protein is Large ribosomal subunit protein bL35.